The sequence spans 318 residues: 2-methyl-6-phytyl-1,4-hydroquinone methyltransferase (318 aa).

The N-terminal stretch at 1–39 (MPEYLLLPAGLISLSLAIAAGLYLLTARGYQSSDSVANA) is a signal peptide. The interval 97–106 (VLDVGCGIGG) is SAM motif I. The interval 157–165 (GSFDVVWSV) is SAM motif II. The tract at residues 184 to 193 (VVKPGGILVV) is SAM motif III.

It belongs to the class I-like SAM-binding methyltransferase superfamily. gTMT family.

It carries out the reaction 2-methyl-6-phytyl-1,4-benzene-1,4-diol + S-adenosyl-L-methionine = 2,3-dimethyl-6-phytylbenzene-1,4-diol + S-adenosyl-L-homocysteine + H(+). The enzyme catalyses 2-methyl-6-(all-trans-nonaprenyl)benzene-1,4-diol + S-adenosyl-L-methionine = plastoquinol-9 + S-adenosyl-L-homocysteine + H(+). It catalyses the reaction 6-geranylgeranyl-2-methylbenzene-1,4-diol + S-adenosyl-L-methionine = 6-geranylgeranyl-2,3-dimethylbenzene-1,4-diol + S-adenosyl-L-homocysteine + H(+). Its pathway is cofactor biosynthesis; tocopherol biosynthesis. Functionally, involved in a key methylation step in both tocopherol (vitamin E) and plastoquinone synthesis. Catalyzes the conversion of 2-methyl-6-phytyl-1,4-hydroquinol (MPBQ) to 2,3-dimethyl-6-phytyl-1,4-hydroquinol (DMPQ, a substrate for tocopherol cyclase), and 2-methyl-6-solanyl-1,4-benzoquinol (MSBQ) to plastoquinol. This is 2-methyl-6-phytyl-1,4-hydroquinone methyltransferase from Synechocystis sp. (strain ATCC 27184 / PCC 6803 / Kazusa).